The following is a 207-amino-acid chain: Zinc finger protein 487 (207 aa).

Residues 1-43 (MLENYSLLLSVGYCITKPEVVCKLEHGQVLWILEEESPSQSHL) form the KRAB domain. The C2H2-type; atypical zinc-finger motif lies at 177–202 (KQCFEYNQCGKAFHEEAACSTHKRVC).

Belongs to the krueppel C2H2-type zinc-finger protein family.

The protein localises to the nucleus. In terms of biological role, may be involved in transcriptional regulation. This is Zinc finger protein 487 (ZNF487) from Homo sapiens (Human).